The chain runs to 820 residues: Protein bicaudal D homolog 2 (820 aa).

N-acetylserine is present on Ser2. Positions 20–270 (EWLRAEVKRL…LSHYMSINDS (251 aa)) form a coiled coil. The interval 25-400 (EVKRLSHELA…RLTENLSALR (376 aa)) is interaction with DYNLL1, DYNC1H1, DYNC1I2, DCTN1 and DCTN2. Residues Ser190, Ser224, and Ser320 each carry the phosphoserine modification. The disordered stretch occupies residues 313 to 332 (SSLDNKTSTPRKDGLAPPSP). At Thr321 the chain carries Phosphothreonine. Residues 336 to 595 (SDLLSELHIS…LLATEVGRAD (260 aa)) are interaction with KIF5A. Residues 340–539 (SELHISEIQK…VTFSEELANL (200 aa)) adopt a coiled-coil conformation. Residues Ser345 and Ser397 each carry the phosphoserine modification. 4 disordered regions span residues 400–427 (RRLQ…GDYY), 563–582 (QGKA…PVLL), 591–618 (VGRA…DPRR), and 799–820 (HEQT…SPSL). The segment covering 404–424 (AGKERQTSLDNEKDRDSHEDG) has biased composition (basic and acidic residues). 2 positions are modified to phosphoserine: Ser570 and Ser578. Residues 586 to 820 (LLATEVGRAD…SKAKPASPSL (235 aa)) form an interaction with RANBP2 region. Thr598 is modified (phosphothreonine). Residues 602–614 (SPSPSSSLPSPLS) are compositionally biased toward low complexity. Residues 662 to 804 (DKDKEALMEE…LELDHEQTRR (143 aa)) adopt a coiled-coil conformation. The segment at 662–810 (DKDKEALMEE…QTRRGRSKAA (149 aa)) is interaction with RAB6A. Ser819 is modified (phosphoserine).

The protein belongs to the BicD family. Part of a tripartite complex with dynein and dynactin, acts an adapter linking the dynein motor complex and dynactin. Interacts with CPNE4 (via VWFA domain). Interacts with NEK9. Interacts with DCTN2. Interacts with RAB6A. Interacts with DNAI1. Interacts with DYNLL1, DYNC1H1, DYNC1I2 and DCTN1. Forms a complex with dynein and dynactin. The dynein-dynactin-BICD2 ternary complex (DDB) binds preferentially to tyrosinated microtubules than to detyrosinated microtubules. Interacts with RANBP2, RAB6A and KIF5A. Interacts with KIF1C. Phosphorylated by NEK9 in vitro. In terms of tissue distribution, ubiquitously expressed with high expression in the spinal cord.

Its subcellular location is the golgi apparatus. The protein localises to the cytoplasm. The protein resides in the cytoskeleton. It is found in the nucleus. It localises to the nuclear pore complex. Its subcellular location is the nucleus envelope. Its function is as follows. Acts as an adapter protein linking the dynein motor complex to various cargos and converts dynein from a non-processive to a highly processive motor in the presence of dynactin. Facilitates and stabilizes the interaction between dynein and dynactin and activates dynein processivity (the ability to move along a microtubule for a long distance without falling off the track). Facilitates the binding of RAB6A to the Golgi by stabilizing its GTP-bound form. Regulates coat complex coatomer protein I (COPI)-independent Golgi-endoplasmic reticulum transport via its interaction with RAB6A and recruitment of the dynein-dynactin motor complex. Contributes to nuclear and centrosomal positioning prior to mitotic entry through regulation of both dynein and kinesin-1. During G2 phase of the cell cycle, associates with RANBP2 at the nuclear pores and recruits dynein and dynactin to the nuclear envelope to ensure proper positioning of the nucleus relative to centrosomes prior to the onset of mitosis. This chain is Protein bicaudal D homolog 2 (Bicd2), found in Mus musculus (Mouse).